Reading from the N-terminus, the 230-residue chain is MKITKNILKAEFIKRPNRFQAYVKINEKIEMVHVPNTGRCKEILIPGSTVILREENNENRKTRYDLIAGYKGDMLISIDSQIPNKVVYEALMNFKIEILKEYANIKREKTFGKSRFDFKLEKENGEVYYLEVKGVTLENDGLTMFPDAPTERGTKHILELIDVKNKGMGAGVLFLIQLNGVKKFTPNHKMDKNFGEALRLAKEKGVDILAYDCLVEESSISLNNPVSIEI.

This sequence belongs to the SfsA family.

This Clostridium botulinum (strain Loch Maree / Type A3) protein is Sugar fermentation stimulation protein homolog.